The following is a 251-amino-acid chain: Phosphate import ATP-binding protein PstB (251 aa).

The ABC transporter domain occupies 5–246 (IEIENFSAYY…PKNRLTEEYL (242 aa)). Residue 37–44 (GPSGCGKT) coordinates ATP.

It belongs to the ABC transporter superfamily. Phosphate importer (TC 3.A.1.7) family. As to quaternary structure, the complex is composed of two ATP-binding proteins (PstB), two transmembrane proteins (PstC and PstA) and a solute-binding protein (PstS).

The protein localises to the cell inner membrane. The catalysed reaction is phosphate(out) + ATP + H2O = ADP + 2 phosphate(in) + H(+). Functionally, part of the ABC transporter complex PstSACB involved in phosphate import. Responsible for energy coupling to the transport system. This is Phosphate import ATP-binding protein PstB from Thermotoga maritima (strain ATCC 43589 / DSM 3109 / JCM 10099 / NBRC 100826 / MSB8).